Here is a 592-residue protein sequence, read N- to C-terminus: Transmembrane 9 superfamily member 3 (592 aa).

An N-terminal signal peptide occupies residues 1-19; sequence MRLPTTLLLFIGALIFSGA. The Lumenal portion of the chain corresponds to 20-229; sequence GTVRSDASDH…SLPHHLEIHW (210 aa). A helical transmembrane segment spans residues 230 to 250; it reads FSIINSCVTVLLLTGFLATIL. Residues 251–302 lie on the Cytoplasmic side of the membrane; it reads MRVLKNDFMKYAQDEEAADDQEETGWKYIHGDVFRFPKNKSLFAASLGSGTQ. Residues 303–323 form a helical membrane-spanning segment; that stretch reads LFTLTIFIFMLSLVGVFYPYN. The Lumenal segment spans residues 324–325; that stretch reads RG. A helical membrane pass occupies residues 326–346; that stretch reads ALFTALVVIYALTSGIAGYTA. Over 347–365 the chain is Cytoplasmic; the sequence is SSFYCQLEGKNWVRNLLLT. The chain crosses the membrane as a helical span at residues 366–386; the sequence is GGLFCGPLFLTFCFLNTVAIA. The Lumenal segment spans residues 387–397; it reads YSATAALPFGT. A helical transmembrane segment spans residues 398–418; it reads IIVIVLIWTLVTSPLLVLGGI. Residues 419-452 are Cytoplasmic-facing; it reads AGKNSKAEFQAPVRTTKYPREIPPLPWYRSAVPQ. The chain crosses the membrane as a helical span at residues 453 to 473; sequence MAMAGFLPFSAIYIELYYIFA. Residues 474 to 485 are Lumenal-facing; sequence SVWGHRIYTIYS. The chain crosses the membrane as a helical span at residues 486 to 506; it reads ILFIVFIILLIVTAFITVALT. At 507–521 the chain is on the cytoplasmic side; it reads YFQLAAEDHEWWWRS. The chain crosses the membrane as a helical span at residues 522–542; sequence FLCGGSTGLFIYAYCLYYYYA. The Lumenal segment spans residues 543 to 553; that stretch reads RSDMSGFMQTS. A helical membrane pass occupies residues 554 to 574; it reads FFFGYMACICYGFFLMLGTVG. The Cytoplasmic portion of the chain corresponds to 575–592; sequence FRAALLFVRHIYRSIKCE. Residues 581-586 carry the Endoplasmic reticulum export signal motif; that stretch reads FVRHIY. The short motif at 590–592 is the Golgi retention signal element; the sequence is KCE.

Belongs to the nonaspanin (TM9SF) (TC 9.A.2) family.

Its subcellular location is the endosome membrane. The protein localises to the golgi apparatus membrane. The sequence is that of Transmembrane 9 superfamily member 3 from Arabidopsis thaliana (Mouse-ear cress).